A 237-amino-acid chain; its full sequence is MEKTMLTFEKVSAHYGKIQALHDVSLHINQGEIVTLIGANGAGKTTLLGTLCGDPRASSGRVVFDGKDITDWQTAKIMREAVAIVPEGRRVFSRMTVEENLAMGGFFAERDRFQERIKWVYELFPRLHERRIQRAGTMSGGEQQMLAIGRALMSQPRLLLLDEPSLGLAPIIIQQIFDTIEQLREQGMTIFLVEQNANQALKLADRGYVLENGHVVLSDTGDALLANEAVRSAYLGG.

The region spanning 6 to 237 (LTFEKVSAHY…EAVRSAYLGG (232 aa)) is the ABC transporter domain. Residue 38–45 (GANGAGKT) participates in ATP binding.

The protein belongs to the ABC transporter superfamily.

Functionally, component of the high-affinity branched-chain amino acid transport system. This is High-affinity branched-chain amino acid transport ATP-binding protein LivF (livF) from Salmonella typhi.